Consider the following 154-residue polypeptide: Large ribosomal subunit protein uL22 (154 aa).

It belongs to the universal ribosomal protein uL22 family. As to quaternary structure, part of the 50S ribosomal subunit.

In terms of biological role, this protein binds specifically to 23S rRNA. It makes multiple contacts with different domains of the 23S rRNA in the assembled 50S subunit and ribosome. The globular domain of the protein is located near the polypeptide exit tunnel on the outside of the subunit, while an extended beta-hairpin is found that lines the wall of the exit tunnel in the center of the 70S ribosome. The polypeptide is Large ribosomal subunit protein uL22 (Natronomonas pharaonis (strain ATCC 35678 / DSM 2160 / CIP 103997 / JCM 8858 / NBRC 14720 / NCIMB 2260 / Gabara) (Halobacterium pharaonis)).